A 158-amino-acid chain; its full sequence is Cyclic pyranopterin monophosphate synthase (158 aa).

Residues 75 to 77 (LCH) and 113 to 114 (ME) contribute to the substrate site. The active site involves Asp-128.

The protein belongs to the MoaC family. As to quaternary structure, homohexamer; trimer of dimers.

The enzyme catalyses (8S)-3',8-cyclo-7,8-dihydroguanosine 5'-triphosphate = cyclic pyranopterin phosphate + diphosphate. It functions in the pathway cofactor biosynthesis; molybdopterin biosynthesis. Functionally, catalyzes the conversion of (8S)-3',8-cyclo-7,8-dihydroguanosine 5'-triphosphate to cyclic pyranopterin monophosphate (cPMP). The protein is Cyclic pyranopterin monophosphate synthase of Paraburkholderia phytofirmans (strain DSM 17436 / LMG 22146 / PsJN) (Burkholderia phytofirmans).